The primary structure comprises 109 residues: Matrix protein 2 (109 aa).

Over 1 to 4 (MLEP) the chain is Virion surface. The chain crosses the membrane as a helical; Signal-anchor for type III membrane protein span at residues 5-27 (FQILSICSFILSALHFMAWTIGH). The Intravirion portion of the chain corresponds to 28–109 (LNQIKRGVNM…ETVLEIEELH (82 aa)). Residues 58-83 (HSYQKEIQAKETMKEVLSDNMEVLSD) adopt a coiled-coil conformation.

As to quaternary structure, homotetramer. Post-translationally, phosphorylated by host.

It is found in the virion membrane. The protein resides in the host cell membrane. Its function is as follows. Forms presumably a highly low-pH gated proton-selective channel. Trp-23 may function as a minimalistic gate that opens and closes the pore. When the environmental pH is lower than a threshold, the BM2 channel would be activated and selectively transport protons across the membrane from the extracellular side to the cytoplasmic side. Crucial for the uncoating process. When the virion is internalized into the endosome, the channel acidifies the virion's interior, promoting the dissociation of matrix protein 1 (M1) from the ribonucleoprotein (RNP) thus allowing the transport of the RNP from the virion into the cell's nucleus. Also plays a role in viral proteins secretory pathway. Elevates the intravesicular pH of normally acidic compartments, such as trans-Golgi network, preventing newly formed hemagglutinin from premature switching to the fusion-active conformation. Plays a crucial role in virion assembly. Expressed in the late phase of the infection. The chain is Matrix protein 2 (M) from Influenza B virus (strain B/Memphis/12/1997).